A 359-amino-acid chain; its full sequence is MIAAQAKLVYQLNKYYTERCQARKAAIAKTIREVCKVVSDVLKEVEVQEPRFISSLSEIDARYEGLEVISPTEFEVVLYLNQMGVFNFVDDGSLPGCAVLKLSDGRKRSMSLWVEFITASGYLSARKIRSRFQTLVAQAVDKCSYRDVVKMIADTSEVKLRIRERYVVQITPAFKCTGIWPRSAAQWPMPHIPWPGPNRVAEVKAEGFNLLSKECYSLTGKQSSAESDAWVLQFGEAENRLLMGGCRNKCLSVLKTLRDRHLELPGQPLNNYHMKTLLLYECEKHPRETDWDESCLGDRLNGILLQLISCLQCRRCPHYFLPNLDLFQGKPHSALESAAKQTWRLAREILTNPKSLDKL.

It belongs to the mab-21 family.

It localises to the nucleus. Its subcellular location is the cytoplasm. Required for several aspects of embryonic development including normal development of the eye. In Homo sapiens (Human), this protein is Protein mab-21-like 2 (MAB21L2).